We begin with the raw amino-acid sequence, 155 residues long: 6,7-dimethyl-8-ribityllumazine synthase (155 aa).

5-amino-6-(D-ribitylamino)uracil contacts are provided by residues F24, A58 to E60, and A82 to I84. A (2S)-2-hydroxy-3-oxobutyl phosphate-binding site is contributed by A87–T88. The active-site Proton donor is the H90. Residue F115 participates in 5-amino-6-(D-ribitylamino)uracil binding. R129 is a (2S)-2-hydroxy-3-oxobutyl phosphate binding site.

This sequence belongs to the DMRL synthase family.

It catalyses the reaction (2S)-2-hydroxy-3-oxobutyl phosphate + 5-amino-6-(D-ribitylamino)uracil = 6,7-dimethyl-8-(1-D-ribityl)lumazine + phosphate + 2 H2O + H(+). It functions in the pathway cofactor biosynthesis; riboflavin biosynthesis; riboflavin from 2-hydroxy-3-oxobutyl phosphate and 5-amino-6-(D-ribitylamino)uracil: step 1/2. Functionally, catalyzes the formation of 6,7-dimethyl-8-ribityllumazine by condensation of 5-amino-6-(D-ribitylamino)uracil with 3,4-dihydroxy-2-butanone 4-phosphate. This is the penultimate step in the biosynthesis of riboflavin. This chain is 6,7-dimethyl-8-ribityllumazine synthase, found in Prosthecochloris aestuarii (strain DSM 271 / SK 413).